Here is a 513-residue protein sequence, read N- to C-terminus: Probable DNA ligase (513 aa).

Glu-215 serves as a coordination point for ATP. Lys-217 functions as the N6-AMP-lysine intermediate in the catalytic mechanism. The ATP site is built by Arg-222, Arg-237, Glu-266, Phe-306, Arg-378, and Lys-384.

The protein belongs to the ATP-dependent DNA ligase family. Requires Mg(2+) as cofactor.

It catalyses the reaction ATP + (deoxyribonucleotide)n-3'-hydroxyl + 5'-phospho-(deoxyribonucleotide)m = (deoxyribonucleotide)n+m + AMP + diphosphate.. Its function is as follows. DNA ligase that seals nicks in double-stranded DNA during DNA replication, DNA recombination and DNA repair. The protein is Probable DNA ligase of Mycobacterium marinum (strain ATCC BAA-535 / M).